The sequence spans 224 residues: PHD finger-containing protein 5 (224 aa).

The segment at 31-81 adopts a PHD-type zinc-finger fold; the sequence is KKPCEVCGSDANELLMMTCFMCRDTREHTYCARVMFQRVPRLWICEECRDF. C34, C37, C49, C52, H58, C61, C75, and C78 together coordinate Zn(2+). The interval 116-137 is disordered; it reads PRTNQVVDNHQDPPIDQTDPSS.

Interacts directly with AIPP3/BDT1.

Together with AIPP3/BDT1, cooperates to form a BAH-PHD bivalent histone reader complex able to read histone H3 lysine 27 trimethylation (H3K27me3) histone marks in order to regulate transcription, especially to prevent early flowering; promotes AIPP3/BDT1 binding to H3K27me3. This is PHD finger-containing protein 5 from Arabidopsis thaliana (Mouse-ear cress).